We begin with the raw amino-acid sequence, 413 residues long: THAP domain-containing protein 5 (413 aa).

A THAP-type zinc finger spans residues 1 to 85 (MPRYCAASYC…LKHTAVPTIF (85 aa)). Positions 84–118 (IFSSPDDEEKGSSQNSPQEIRREDQEETTKNVESK) are disordered. Residues 102–118 (EIRREDQEETTKNVESK) are compositionally biased toward basic and acidic residues. The stretch at 375-399 (RLRSLEALIGQLKQENLLSEEKLKI) forms a coiled coil.

It is found in the nucleus. This chain is THAP domain-containing protein 5 (THAP5), found in Gallus gallus (Chicken).